Here is a 521-residue protein sequence, read N- to C-terminus: Replicase polyprotein 1ab (521 aa).

Residues 1–58 (GGGGQSFLAADNAVLVSTQCYKRHSYVEIPSNLLVQNGMSLKDGANLYVYKRVNGAFV) enclose the AV-Nsp11N/CoV-Nsp15M domain. Residues 75-216 (EPRSDVERDF…EDGSIKTCYP (142 aa)) form the NendoU domain. Active-site residues include His-104, His-119, Lys-159, Lys-263, Asp-347, Lys-391, and Glu-424. Residues 219–518 (QSAWTCGYNM…NTSFTSDSFV (300 aa)) form the Nidovirus-type SAM-dependent 2'-O-MTase domain.

Its function is as follows. The replicase polyprotein of coronaviruses is a multifunctional protein: it contains the activities necessary for the transcription of negative stranded RNA, leader RNA, subgenomic mRNAs and progeny virion RNA as well as proteinases responsible for the cleavage of the polyprotein into functional products. NendoU is a Mn(2+)-dependent, uridylate-specific enzyme, which leaves 2'-3'-cyclic phosphates 5' to the cleaved bond. The protein is Replicase polyprotein 1ab (rep) of Gallus gallus (Chicken).